We begin with the raw amino-acid sequence, 306 residues long: tRNA pseudouridine synthase B (306 aa).

Asp-39 functions as the Nucleophile in the catalytic mechanism.

This sequence belongs to the pseudouridine synthase TruB family. Type 1 subfamily.

The catalysed reaction is uridine(55) in tRNA = pseudouridine(55) in tRNA. Responsible for synthesis of pseudouridine from uracil-55 in the psi GC loop of transfer RNAs. The sequence is that of tRNA pseudouridine synthase B from Arthrobacter sp. (strain FB24).